Reading from the N-terminus, the 128-residue chain is Ribonuclease P protein component (128 aa).

It belongs to the RnpA family. In terms of assembly, consists of a catalytic RNA component (M1 or rnpB) and a protein subunit.

The enzyme catalyses Endonucleolytic cleavage of RNA, removing 5'-extranucleotides from tRNA precursor.. Functionally, RNaseP catalyzes the removal of the 5'-leader sequence from pre-tRNA to produce the mature 5'-terminus. It can also cleave other RNA substrates such as 4.5S RNA. The protein component plays an auxiliary but essential role in vivo by binding to the 5'-leader sequence and broadening the substrate specificity of the ribozyme. The polypeptide is Ribonuclease P protein component (Parasynechococcus marenigrum (strain WH8102)).